Reading from the N-terminus, the 727-residue chain is Synaptic vesicle glycoprotein 2C (727 aa).

The interval 1-57 (MEDSYKDRTSLMKGAKDIAKEVKKQTVKKVNQAVDRAQDEYTQRSYSRFQDEEDDDD) is interaction with SYT1. The Cytoplasmic segment spans residues 1 to 154 (MEDSYKDRTS…CGHGRFQWAL (154 aa)). Residues 22–128 (VKKQTVKKVN…DRRELESERR (107 aa)) are disordered. S75 and S76 each carry phosphoserine. Position 79 is a phosphothreonine (T79). Basic and acidic residues predominate over residues 113–128 (KGDEYKDRRELESERR). Residues 155–175 (FFVLGMALMADGVEVFVVGFV) traverse the membrane as a helical segment. Topologically, residues 176–191 (LPSAETDLCIPNSGSG) are extracellular. Residues 192-212 (WLGSIVYLGMMVGAFFWGGLA) traverse the membrane as a helical segment. Topologically, residues 213 to 226 (DKVGRKQSLLICMS) are cytoplasmic. Residues 227 to 247 (VNGFFAFLSSFVQGYGFFLVC) form a helical membrane-spanning segment. Position 248 (R248) is a topological domain, extracellular. A helical transmembrane segment spans residues 249-269 (LLSGFGIGGAIPTVFSYFAEV). The Cytoplasmic segment spans residues 270 to 280 (LAREKRGEHLS). A helical transmembrane segment spans residues 281–301 (WLCMFWMIGGIYASAMAWAII). Topologically, residues 302 to 320 (PHYGWSFSMGSAYQFHSWR) are extracellular. A helical transmembrane segment spans residues 321 to 341 (VFVIVCALPCVSSVVALTFMP). The Cytoplasmic portion of the chain corresponds to 342-437 (ESPRFLLEVG…PVRENTIKLT (96 aa)). Residues 438–458 (IVWFTLSFGYYGLSVWFPDVI) traverse the membrane as a helical segment. Over 459-578 (KHLQSDEYAL…CQITFDDDYS (120 aa)) the chain is Extracellular. Phosphotyrosine is present on Y466. N-linked (GlcNAc...) asparagine glycans are attached at residues N480, N484, N534, N559, and N565. The chain crosses the membrane as a helical span at residues 579–599 (AYWIYFVNFLGTLAVLPGNIV). Over 600–609 (SALLMDRIGR) the chain is Cytoplasmic. Residues 610–630 (LTMLGGSMVLSGISCFFLWFG) traverse the membrane as a helical segment. At 631-636 (TSESMM) the chain is on the extracellular side. A helical membrane pass occupies residues 637-657 (IGMLCLYNGLTISAWNSLDVV). Residues 658-670 (TVELYPTDRRATG) are Cytoplasmic-facing. The chain crosses the membrane as a helical span at residues 671–693 (FGFLNALCKAAAVLGNLIFGSLV). At 694–697 (SITK) the chain is on the extracellular side. Residues 698–716 (AIPILLASTVLVCGGLVGL) traverse the membrane as a helical segment. Residues 717-727 (RLPDTRTQVLM) are Cytoplasmic-facing.

This sequence belongs to the major facilitator superfamily. Interacts with SYT1 in a calcium-dependent manner. As to quaternary structure, (Microbial infection) Interacts with C.botulinum neurotoxin type A (BoNT/A, botA). In terms of assembly, (Microbial infection) Interacts with C.botulinum neurotoxin type D (BoNT/D, botD). Post-translationally, N-glycosylated. In terms of tissue distribution, expressed in specific subsets of conventional synapses in the retina (at protein level). Expressed in diaphragm motor nerve terminals (at protein level). Expressed in a subset of hippocampus neurons (at protein level).

It localises to the cytoplasmic vesicle. It is found in the secretory vesicle. The protein resides in the synaptic vesicle membrane. Functionally, plays a role in the control of regulated secretion in neural and endocrine cells, enhancing selectively low-frequency neurotransmission. Positively regulates vesicle fusion by maintaining the readily releasable pool of secretory vesicles. (Microbial infection) Receptor for C.botulinum neurotoxin type A (BoNT/A, botA); the toxin binds Sv2c via extracellular loop 4. Its function is as follows. (Microbial infection) Possible receptor for C.botulinum neurotoxin type D (BoNT/D, botD). This is Synaptic vesicle glycoprotein 2C (Sv2c) from Mus musculus (Mouse).